Here is a 292-residue protein sequence, read N- to C-terminus: Pantothenate synthetase (292 aa).

32-39 contributes to the ATP binding site; that stretch reads MGFLHEGH. Residue H39 is the Proton donor of the active site. Q63 contributes to the (R)-pantoate binding site. Q63 provides a ligand contact to beta-alanine. 150 to 153 serves as a coordination point for ATP; that stretch reads GEKD. Q156 contributes to the (R)-pantoate binding site. ATP contacts are provided by residues V179 and 187-190; that span reads MSSR.

The protein belongs to the pantothenate synthetase family. In terms of assembly, homodimer.

It is found in the cytoplasm. It carries out the reaction (R)-pantoate + beta-alanine + ATP = (R)-pantothenate + AMP + diphosphate + H(+). The protein operates within cofactor biosynthesis; (R)-pantothenate biosynthesis; (R)-pantothenate from (R)-pantoate and beta-alanine: step 1/1. Its function is as follows. Catalyzes the condensation of pantoate with beta-alanine in an ATP-dependent reaction via a pantoyl-adenylate intermediate. This is Pantothenate synthetase from Myxococcus xanthus (strain DK1622).